We begin with the raw amino-acid sequence, 265 residues long: Cell adhesion molecule CEACAM10 (265 aa).

Residues 1–33 (MELASAHLHKGQVPWVGLLLTASLLTYWSPATT) form the signal peptide. 2 consecutive Ig-like V-type domains span residues 35–142 (QVTV…HVHP) and 155–262 (QVTV…NVHA). Residues N44, N87, and N224 are each glycosylated (N-linked (GlcNAc...) asparagine).

Belongs to the immunoglobulin superfamily. CEA family. As to expression, abundant in seminal vesicle and traces in epididymis and prostate (at protein level). Highly expressed in seminal vesicle, minor in colon and placenta and, to a lesser extent, in small intestine, caecum, stomach, salivary gland and bone marrow.

The protein localises to the secreted. It localises to the extracellular space. Its function is as follows. May interact with other CEACAM proteins on the sperm surface. The polypeptide is Cell adhesion molecule CEACAM10 (Mus musculus (Mouse)).